The sequence spans 390 residues: Nuclear receptor subfamily 2 group F member 6 (390 aa).

Residues 1 to 15 (MAMVTGGWGDPGGDT) show a composition bias toward gly residues. A disordered region spans residues 1–50 (MAMVTGGWGDPGGDTNGVDKAGGSYPRATEDDSASPPGATSDAEPGDEER). Phosphoserine is present on residues serine 35 and serine 41. Residues 54-129 (QVDCVVCGDK…VGMRKEAVQR (76 aa)) constitute a DNA-binding region (nuclear receptor). The segment at 57-77 (CVVCGDKSSGKHYGVFTCEGC) adopts an NR C4-type zinc-finger fold. Serine 84 is subject to Phosphoserine. The NR C4-type zinc finger occupies 93–117 (CRSNRDCQIDQHHRNQCQYCRLKKC). An NR LBD domain is found at 157–380 (PVSELIAQLL…TLIRDMLLSG (224 aa)). An important for dimerization region spans residues 314-390 (LQEKAQVALT…STFNWPYGSG (77 aa)).

This sequence belongs to the nuclear hormone receptor family. NR2 subfamily. As to quaternary structure, binds DNA as dimer; homodimer and heterodimer with NR2F2 and probably NR2F1. Interacts with THRB.

Its subcellular location is the nucleus. Its function is as follows. Transcription factor predominantly involved in transcriptional repression. Binds to promoter/enhancer response elements that contain the imperfect 5'-AGGTCA-3' direct or inverted repeats with various spacings which are also recognized by other nuclear hormone receptors. Involved in modulation of hormonal responses. Represses transcriptional activity of the lutropin-choriogonadotropic hormone receptor/LHCGR gene, the renin/REN gene and the oxytocin-neurophysin/OXT gene. Represses the triiodothyronine-dependent and -independent transcriptional activity of the thyroid hormone receptor gene in a cell type-specific manner. The corepressing function towards thyroid hormone receptor beta/THRB involves at least in part the inhibition of THRB binding to triiodothyronine response elements (TREs) by NR2F6. Inhibits NFATC transcription factor DNA binding and subsequently its transcriptional activity. Acts as transcriptional repressor of IL-17 expression in Th-17 differentiated CD4(+) T cells and may be involved in induction and/or maintenance of peripheral immunological tolerance and autoimmunity. Involved in development of forebrain circadian clock; is required early in the development of the locus coeruleus (LC). In Mus musculus (Mouse), this protein is Nuclear receptor subfamily 2 group F member 6 (Nr2f6).